Reading from the N-terminus, the 269-residue chain is Tryptophan synthase alpha chain (269 aa).

Residues Glu-49 and Asp-60 each act as proton acceptor in the active site.

The protein belongs to the TrpA family. In terms of assembly, tetramer of two alpha and two beta chains.

It catalyses the reaction (1S,2R)-1-C-(indol-3-yl)glycerol 3-phosphate + L-serine = D-glyceraldehyde 3-phosphate + L-tryptophan + H2O. It functions in the pathway amino-acid biosynthesis; L-tryptophan biosynthesis; L-tryptophan from chorismate: step 5/5. Its function is as follows. The alpha subunit is responsible for the aldol cleavage of indoleglycerol phosphate to indole and glyceraldehyde 3-phosphate. This Pseudomonas syringae pv. syringae protein is Tryptophan synthase alpha chain.